Here is a 98-residue protein sequence, read N- to C-terminus: Beta-elicitin DRE-beta (98 aa).

3 disulfides stabilise this stretch: C3/C71, C27/C56, and C51/C95.

This sequence belongs to the elicitin family.

The protein resides in the secreted. Its function is as follows. Induces local and distal defense responses (incompatible hypersensitive reaction) in plants from the solanaceae and cruciferae families. Elicits leaf necrosis and causes the accumulation of pathogenesis-related proteins. Might interact with the lipidic molecules of the plasma membrane. This is Beta-elicitin DRE-beta from Phytophthora drechsleri.